A 156-amino-acid chain; its full sequence is IFN signaling evasion protein OPG029 (156 aa).

The protein belongs to the orthopoxvirus OPG029 family. Interacts with host TANK, TBKBP1 and AZI2; these interactions prevent interferon production. Interacts with host STAT2.

In terms of biological role, prevents establishment of cellular antiviral state by blocking virus-induced phosphorylation and activation of interferon regulatory factors 3/IRF3 and 7/IRF7, transcription factors critical for the induction of interferons alpha and beta. This blockage is produced through the inhibition of host TBK1, by binding host TBK1 adapter proteins TBKBP1 and AZI2, thereby producing a strong inhibition of the phosphorylation and activation of IRF3 and IRF7. Also acts as an inhibitor of the cellular response to type I IFN by interacting with host STAT2. Mechanistically, exerts its inhibitory effect after host ISGF3 complex (composed of STAT1, STAT2 and IRF9) binding to the interferon stimulated response element (ISRE). This Variola virus (isolate Human/India/Ind3/1967) (VARV) protein is IFN signaling evasion protein OPG029 (OPG029).